Consider the following 401-residue polypeptide: MVAGINLMQETKSIRDVEIEGKRVLIRVDFNVPMDSDFNISDDTRIREAIPTINHCIDNGAKSIVLVSHLGRPRGKSSEFSLKHILKRLERLLNRSVIFVESLEGVSSVMATLPQKSVILLENIRFLEGEEKNDEKLSKNLASLCDIYINDAFGASHRKHASTYGVAKFAPVKVAGLLLKKEIDSFAKALASPLKPVLLIVGGSKVSSKITLLSNILDVVDKIVIGGAMSNTFLKSLGYDMQRSLVEDPLVPEAAKILGLAKQKGVKIYLPVDVVCTDDIKNPKEIKITPAQDVPENFLAADIGPASVKLFGEVIRDCETIIWNGPMGVYEVQNFSRGTFQLAHVVADTYAYSVIGGGDTADAIDRAGEKDNMSFTSTGGGASLELLEGKILPAFEVLERK.

Residues Asp-29–Asn-31, Arg-45, His-69–Arg-72, Arg-125, and Arg-158 each bind substrate. ATP-binding positions include Lys-209, Glu-331, and Gly-357–Thr-360.

It belongs to the phosphoglycerate kinase family. As to quaternary structure, monomer.

Its subcellular location is the cytoplasm. The catalysed reaction is (2R)-3-phosphoglycerate + ATP = (2R)-3-phospho-glyceroyl phosphate + ADP. It functions in the pathway carbohydrate degradation; glycolysis; pyruvate from D-glyceraldehyde 3-phosphate: step 2/5. The chain is Phosphoglycerate kinase from Wolinella succinogenes (strain ATCC 29543 / DSM 1740 / CCUG 13145 / JCM 31913 / LMG 7466 / NCTC 11488 / FDC 602W) (Vibrio succinogenes).